Consider the following 203-residue polypeptide: Imidazoleglycerol-phosphate dehydratase (203 aa).

Belongs to the imidazoleglycerol-phosphate dehydratase family.

Its subcellular location is the cytoplasm. It carries out the reaction D-erythro-1-(imidazol-4-yl)glycerol 3-phosphate = 3-(imidazol-4-yl)-2-oxopropyl phosphate + H2O. It functions in the pathway amino-acid biosynthesis; L-histidine biosynthesis; L-histidine from 5-phospho-alpha-D-ribose 1-diphosphate: step 6/9. The chain is Imidazoleglycerol-phosphate dehydratase from Helicobacter hepaticus (strain ATCC 51449 / 3B1).